The primary structure comprises 219 residues: Interleukin-12 subunit alpha (219 aa).

A signal peptide spans 1–22 (MCPARSLLLVATLVLLDYLSLA). N-linked (GlcNAc...) asparagine glycans are attached at residues asparagine 24, asparagine 93, and asparagine 107. 3 disulfides stabilise this stretch: cysteine 37/cysteine 110, cysteine 64/cysteine 196, and cysteine 85/cysteine 123.

Belongs to the IL-6 superfamily. In terms of assembly, heterodimer with IL12B; disulfide-linked. This heterodimer is known as interleukin IL-12. Heterodimer with EBI3/IL27B; not disulfide-linked. This heterodimer is known as interleukin IL-35. Interacts with NBR1; this interaction promotes IL-12 secretion.

It is found in the secreted. In terms of biological role, heterodimerizes with IL12B to form the IL-12 cytokine or with EBI3/IL27B to form the IL-35 cytokine. IL-12 is primarily produced by professional antigen-presenting cells (APCs) such as B-cells and dendritic cells (DCs) as well as macrophages and granulocytes and regulates T-cell and natural killer-cell responses, induces the production of interferon-gamma (IFN-gamma), favors the differentiation of T-helper 1 (Th1) cells and is an important link between innate resistance and adaptive immunity. Mechanistically, exerts its biological effects through a receptor composed of IL12R1 and IL12R2 subunits. Binding to the receptor results in the rapid tyrosine phosphorylation of a number of cellular substrates including the JAK family kinases TYK2 and JAK2. In turn, recruited STAT4 gets phosphorylated and translocates to the nucleus where it regulates cytokine/growth factor responsive genes. As part of IL-35, plays essential roles in maintaining the immune homeostasis of the liver microenvironment and also functions as an immune-suppressive cytokine. Mediates biological events through unconventional receptors composed of IL12RB2 and gp130/IL6ST heterodimers or homodimers. Signaling requires the transcription factors STAT1 and STAT4, which form a unique heterodimer that binds to distinct DNA sites. The polypeptide is Interleukin-12 subunit alpha (IL12A) (Macaca mulatta (Rhesus macaque)).